Consider the following 845-residue polypeptide: Protein P (845 aa).

Residues 1 to 179 (MPLSYQHFRK…FCGSPYSWEQ (179 aa)) are terminal protein domain (TP). Residues 180–348 (ELQHGRLVIK…YCLSHLVNLR (169 aa)) form a spacer region. Residues 226-246 (GLQPHQGPLASSQPGRSGSIR) form a disordered region. Residues 349-692 (EDRGPCDEHG…YMNLYPVARQ (344 aa)) are polymerase/reverse transcriptase domain (RT). A Reverse transcriptase domain is found at 359–602 (EHHIRIPRTP…YSLNFMGYVI (244 aa)). Mg(2+) is bound by residues Asp431, Asp553, and Asp554.

It belongs to the hepadnaviridae P protein family.

It catalyses the reaction DNA(n) + a 2'-deoxyribonucleoside 5'-triphosphate = DNA(n+1) + diphosphate. The enzyme catalyses Endonucleolytic cleavage to 5'-phosphomonoester.. With respect to regulation, activated by host HSP70 and HSP40 in vitro to be able to bind the epsilon loop of the pgRNA. Because deletion of the RNase H region renders the protein partly chaperone-independent, the chaperones may be needed indirectly to relieve occlusion of the RNA-binding site by this domain. Inhibited by several reverse-transcriptase inhibitors: Lamivudine, Adefovir and Entecavir. In terms of biological role, multifunctional enzyme that converts the viral RNA genome into dsDNA in viral cytoplasmic capsids. This enzyme displays a DNA polymerase activity that can copy either DNA or RNA templates, and a ribonuclease H (RNase H) activity that cleaves the RNA strand of RNA-DNA heteroduplexes in a partially processive 3'- to 5'-endonucleasic mode. Neo-synthesized pregenomic RNA (pgRNA) are encapsidated together with the P protein, and reverse-transcribed inside the nucleocapsid. Initiation of reverse-transcription occurs first by binding the epsilon loop on the pgRNA genome, and is initiated by protein priming, thereby the 5'-end of (-)DNA is covalently linked to P protein. Partial (+)DNA is synthesized from the (-)DNA template and generates the relaxed circular DNA (RC-DNA) genome. After budding and infection, the RC-DNA migrates in the nucleus, and is converted into a plasmid-like covalently closed circular DNA (cccDNA). The activity of P protein does not seem to be necessary for cccDNA generation, and is presumably released from (+)DNA by host nuclear DNA repair machinery. The chain is Protein P from Hepatitis B virus genotype A2 subtype adw2 (isolate Germany/991/1990) (HBV-A).